We begin with the raw amino-acid sequence, 519 residues long: Serine/threonine-protein kinase RIO3 (519 aa).

Residues serine 8 and serine 112 each carry the phosphoserine modification. Residues 121 to 159 (PYEDSDSSEDEVDWQDTRDDPYRPAKPVPTPKKGFIGKG) are disordered. A Phosphotyrosine modification is found at tyrosine 122. Residues 124–134 (DSDSSEDEVDW) are compositionally biased toward acidic residues. Phosphoserine occurs at positions 125, 127, and 128. Residues 251 to 519 (ETITGCISTG…DGDPPLLYDE (269 aa)) enclose the Protein kinase domain. ATP-binding positions include 257–265 (ISTGKESVV) and lysine 290. The active-site Proton acceptor is aspartate 406.

It belongs to the protein kinase superfamily. RIO-type Ser/Thr kinase family. In terms of assembly, interacts with CASP10. Interacts with IRF3; RIOK3 probably mediates the interaction of TBK1 with IRF3. Associated with 40S pre-ribosomal particles. Mg(2+) serves as cofactor. Post-translationally, autophosphorylated (in vitro). As to expression, widely expressed.

Its subcellular location is the cytoplasm. It carries out the reaction L-seryl-[protein] + ATP = O-phospho-L-seryl-[protein] + ADP + H(+). The catalysed reaction is L-threonyl-[protein] + ATP = O-phospho-L-threonyl-[protein] + ADP + H(+). Involved in regulation of type I interferon (IFN)-dependent immune response which plays a critical role in the innate immune response against DNA and RNA viruses. May act as an adapter protein essential for the recruitment of TBK1 to IRF3. Phosphorylates IFIH1 on 'Ser-828' interfering with IFIH1 filament assembly on long dsRNA and resulting in attenuated IFIH1-signaling. Can inhibit CASP10 isoform 7-mediated activation of the NF-kappaB signaling pathway. May play a role in the biogenesis of the 40S ribosomal subunit. Involved in the processing of 21S pre-rRNA to the mature 18S rRNA. In Homo sapiens (Human), this protein is Serine/threonine-protein kinase RIO3 (RIOK3).